The chain runs to 258 residues: UPF0246 protein YaaA (258 aa).

It belongs to the UPF0246 family.

In Escherichia coli O6:K15:H31 (strain 536 / UPEC), this protein is UPF0246 protein YaaA.